A 122-amino-acid polypeptide reads, in one-letter code: Large ribosomal subunit protein uL18 (122 aa).

It belongs to the universal ribosomal protein uL18 family. As to quaternary structure, part of the 50S ribosomal subunit; part of the 5S rRNA/L5/L18/L25 subcomplex. Contacts the 5S and 23S rRNAs.

This is one of the proteins that bind and probably mediate the attachment of the 5S RNA into the large ribosomal subunit, where it forms part of the central protuberance. The protein is Large ribosomal subunit protein uL18 of Synechococcus sp. (strain JA-2-3B'a(2-13)) (Cyanobacteria bacterium Yellowstone B-Prime).